The chain runs to 525 residues: GMP synthase [glutamine-hydrolyzing] (525 aa).

Residues 9-207 form the Glutamine amidotransferase type-1 domain; that stretch reads RILILDFGSQ…VRDICQCEAL (199 aa). Residue C86 is the Nucleophile of the active site. Catalysis depends on residues H181 and E183. A GMPS ATP-PPase domain is found at 208–400; it reads WTPAKIIDDA…LGLPYDMLYR (193 aa). Residue 235–241 coordinates ATP; it reads SGGVDSS.

As to quaternary structure, homodimer.

The catalysed reaction is XMP + L-glutamine + ATP + H2O = GMP + L-glutamate + AMP + diphosphate + 2 H(+). It functions in the pathway purine metabolism; GMP biosynthesis; GMP from XMP (L-Gln route): step 1/1. Catalyzes the synthesis of GMP from XMP. The polypeptide is GMP synthase [glutamine-hydrolyzing] (Escherichia fergusonii (strain ATCC 35469 / DSM 13698 / CCUG 18766 / IAM 14443 / JCM 21226 / LMG 7866 / NBRC 102419 / NCTC 12128 / CDC 0568-73)).